We begin with the raw amino-acid sequence, 338 residues long: Phosphatidylglycerol--prolipoprotein diacylglyceryl transferase (338 aa).

The next 4 membrane-spanning stretches (helical) occupy residues 24 to 44 (WYGLMYLVAFGIAYFLFSYQV), 67 to 87 (LFIWGILGLILGARIFGTLVY), 115 to 135 (GFQGMSYHGGFIGGFLGVILW), and 141 to 161 (FKFAAVADLMAVSIPLGYTFG). Arg-162 contacts a 1,2-diacyl-sn-glycero-3-phospho-(1'-sn-glycerol). 3 helical membrane passes run 224–244 (PSQLYEAFFEGIILWLILWLL), 252–272 (GFLVCVYTLGYGFFRFFIEYF), and 304–324 (GQILCSLMILASLAAMLILYL).

The protein belongs to the Lgt family.

It localises to the cell inner membrane. It catalyses the reaction L-cysteinyl-[prolipoprotein] + a 1,2-diacyl-sn-glycero-3-phospho-(1'-sn-glycerol) = an S-1,2-diacyl-sn-glyceryl-L-cysteinyl-[prolipoprotein] + sn-glycerol 1-phosphate + H(+). The protein operates within protein modification; lipoprotein biosynthesis (diacylglyceryl transfer). Catalyzes the transfer of the diacylglyceryl group from phosphatidylglycerol to the sulfhydryl group of the N-terminal cysteine of a prolipoprotein, the first step in the formation of mature lipoproteins. The chain is Phosphatidylglycerol--prolipoprotein diacylglyceryl transferase from Treponema denticola (strain ATCC 35405 / DSM 14222 / CIP 103919 / JCM 8153 / KCTC 15104).